The sequence spans 104 residues: Photosystem II reaction center Psb28 protein (104 aa).

Belongs to the Psb28 family. As to quaternary structure, part of the photosystem II complex.

It is found in the cellular thylakoid membrane. The chain is Photosystem II reaction center Psb28 protein from Synechococcus sp. (strain JA-3-3Ab) (Cyanobacteria bacterium Yellowstone A-Prime).